The sequence spans 1058 residues: Leucine-rich repeat and coiled-coil domain-containing protein PF3D7_0703800 (1058 aa).

Over residues 1 to 10 (MAIKKKKKET) the composition is skewed to basic residues. The interval 1 to 34 (MAIKKKKKETKSKDNNNDNLRNEKKSTNLENGKY) is disordered. The span at 11–34 (KSKDNNNDNLRNEKKSTNLENGKY) shows a compositional bias: basic and acidic residues. Residues 515 to 544 (LKQLYTFIKNYENNNDKLNIKSQIINKDKN) adopt a coiled-coil conformation. Positions 641-661 (ENKDHLQHEEHTHEEEPKDAN) are enriched in basic and acidic residues. Disordered stretches follow at residues 641–665 (ENKDHLQHEEHTHEEEPKDANGDMV) and 706–728 (NIEDKSGDMENMKEPNGDMENMK). A coiled-coil region spans residues 872–905 (NYDHTQENILKNKNNMEDQNNLLEQNIMTDQLQN).

This is Leucine-rich repeat and coiled-coil domain-containing protein PF3D7_0703800 from Plasmodium falciparum (isolate 3D7).